The chain runs to 1131 residues: Inositol hexakisphosphate and diphosphoinositol-pentakisphosphate kinase 2 (1131 aa).

The disordered stretch occupies residues 21–53; sequence DELLDQSKPENLDNLYEHTEDEEDEEDDEYDSP. Basic and acidic residues predominate over residues 25–38; that stretch reads DQSKPENLDNLYEH. The span at 39-52 shows a compositional bias: acidic residues; the sequence is TEDEEDEEDDEYDS. Position 67–68 (67–68) interacts with substrate; it reads KK. Residues Arg148, Lys201, His208, Arg227, 251-254, and 260-262 contribute to the ATP site; these read EEFM and DVK. Residue 227–228 coordinates substrate; it reads RK. Substrate contacts are provided by Lys262 and Arg276. ATP contacts are provided by residues Ser278, Asp323, and 335–337; that span reads DVN. 340-343 contacts substrate; that stretch reads SFVK. Residues 385 to 456 form a polyphosphoinositide-binding domain region; it reads PTTSGTKMEL…VLDIARQLLV (72 aa). The tract at residues 912–951 is disordered; it reads KGCEEDKNLPSGFGYRPASQENESSKKHTHANDSDEDLGV. Over residues 934 to 951 the composition is skewed to basic and acidic residues; that stretch reads ESSKKHTHANDSDEDLGV.

Belongs to the histidine acid phosphatase family. VIP1 subfamily.

Its subcellular location is the cytoplasm. It localises to the cytosol. It catalyses the reaction 1D-myo-inositol hexakisphosphate + ATP = 1-diphospho-1D-myo-inositol 2,3,4,5,6-pentakisphosphate + ADP. It carries out the reaction 5-diphospho-1D-myo-inositol 1,2,3,4,6-pentakisphosphate + ATP + H(+) = 1,5-bis(diphospho)-1D-myo-inositol 2,3,4,6-tetrakisphosphate + ADP. In terms of biological role, bifunctional inositol kinase that acts in concert with the IP6K kinases IP6K1, IP6K2 and IP6K3 to synthesize the diphosphate group-containing inositol pyrophosphates diphosphoinositol pentakisphosphate, PP-InsP5, and bis-diphosphoinositol tetrakisphosphate, (PP)2-InsP4. PP-InsP5 and (PP)2-InsP4, also respectively called InsP7 and InsP8, regulate a variety of cellular processes, including apoptosis, vesicle trafficking, cytoskeletal dynamics, exocytosis, insulin signaling and neutrophil activation. Phosphorylates inositol hexakisphosphate (InsP6) at position 1 to produce PP-InsP5 which is in turn phosphorylated by IP6Ks to produce (PP)2-InsP4. Alternatively, phosphorylates PP-InsP5 at position 1, produced by IP6Ks from InsP6, to produce (PP)2-InsP4. This chain is Inositol hexakisphosphate and diphosphoinositol-pentakisphosphate kinase 2, found in Xenopus laevis (African clawed frog).